A 384-amino-acid chain; its full sequence is Chaperone protein DnaJ (384 aa).

Positions 5-69 constitute a J domain; sequence DYYKVLGVDR…QKRAQYDQFG (65 aa). The CR-type zinc finger occupies 141-223; the sequence is GKKTQVSYTR…CGGKGTVERK (83 aa). C154, C157, C171, C174, C197, C200, C211, and C214 together coordinate Zn(2+). 4 CXXCXGXG motif repeats span residues 154–161, 171–178, 197–204, and 211–218; these read CETCGGNG, CDKCHGTG, CDKCNGRG, and CKTCGGKG.

It belongs to the DnaJ family. Homodimer. Zn(2+) serves as cofactor.

It localises to the cytoplasm. Its function is as follows. Participates actively in the response to hyperosmotic and heat shock by preventing the aggregation of stress-denatured proteins and by disaggregating proteins, also in an autonomous, DnaK-independent fashion. Unfolded proteins bind initially to DnaJ; upon interaction with the DnaJ-bound protein, DnaK hydrolyzes its bound ATP, resulting in the formation of a stable complex. GrpE releases ADP from DnaK; ATP binding to DnaK triggers the release of the substrate protein, thus completing the reaction cycle. Several rounds of ATP-dependent interactions between DnaJ, DnaK and GrpE are required for fully efficient folding. Also involved, together with DnaK and GrpE, in the DNA replication of plasmids through activation of initiation proteins. This is Chaperone protein DnaJ from Lactobacillus acidophilus (strain ATCC 700396 / NCK56 / N2 / NCFM).